A 549-amino-acid chain; its full sequence is Undecaprenyl phosphate-alpha-4-amino-4-deoxy-L-arabinose arabinosyl transferase (549 aa).

12 helical membrane passes run 9 to 29 (LLLI…GLWI), 80 to 100 (LFGV…LAYL), 112 to 132 (SLAC…SGYA), 136 to 156 (PQFT…LDAG), 176 to 196 (FLTK…PYML), 204 to 224 (LLGY…PWAL), 256 to 276 (PWWF…GLLP), 288 to 308 (QPPV…FSLS), 312 to 332 (LPTY…HALV), 346 to 366 (NGLL…YLQL), 376 to 396 (FELF…LAQW), and 402 to 422 (AWAA…AAMP).

This sequence belongs to the glycosyltransferase 83 family.

The protein localises to the cell inner membrane. It carries out the reaction 4-amino-4-deoxy-alpha-L-arabinopyranosyl di-trans,octa-cis-undecaprenyl phosphate + lipid IVA = lipid IIA + di-trans,octa-cis-undecaprenyl phosphate.. It participates in lipopolysaccharide metabolism; 4-amino-4-deoxy-beta-L-arabinose-lipid A biosynthesis. In terms of biological role, catalyzes the transfer of the L-Ara4N moiety of the glycolipid undecaprenyl phosphate-alpha-L-Ara4N to lipid A. The modified arabinose is attached to lipid A and is required for resistance to polymyxin and cationic antimicrobial peptides. This is Undecaprenyl phosphate-alpha-4-amino-4-deoxy-L-arabinose arabinosyl transferase from Pseudomonas paraeruginosa (strain DSM 24068 / PA7) (Pseudomonas aeruginosa (strain PA7)).